Consider the following 174-residue polypeptide: Co-chaperone protein HscB homolog (174 aa).

Residues 2 to 74 form the J domain; the sequence is NYFELFKFSP…IRRAEHMLSL (73 aa).

This sequence belongs to the HscB family. Interacts with HscA and stimulates its ATPase activity.

Its function is as follows. Co-chaperone involved in the maturation of iron-sulfur cluster-containing proteins. Seems to help targeting proteins to be folded toward HscA. This Shewanella sp. (strain MR-4) protein is Co-chaperone protein HscB homolog.